Here is a 131-residue protein sequence, read N- to C-terminus: Protein FAM107B (131 aa).

Position 2 is an N-acetylalanine (Ala2). The tract at residues 39-79 (MNQKRGLAPQNKPELQKVMEKRRRDQVIKQKEEEAQKKKSD) is disordered. Lys50 bears the N6-acetyllysine mark. Positions 52–79 (ELQKVMEKRRRDQVIKQKEEEAQKKKSD) are enriched in basic and acidic residues. The stretch at 61-112 (RRDQVIKQKEEEAQKKKSDLEIELLKRQQKLEQLELEKQKLQEEQENAPEFV) forms a coiled coil.

This sequence belongs to the FAM107 family. In terms of tissue distribution, expressed in the hippocampus and hypothalamus. Expressed in the pontine nuclei and reticulotegmental nucleus. Expressed in Purkinje cell and nuclear layers of the cerebelum. Expressed in the choroid plexus. Expressed in hippocampal granule neurons of the dente gyrus.

This chain is Protein FAM107B, found in Mus musculus (Mouse).